The following is a 354-amino-acid chain: Probable L-ascorbate-6-phosphate lactonase UlaG (354 aa).

It belongs to the UlaG family. It depends on a divalent metal cation as a cofactor.

Its subcellular location is the cytoplasm. It carries out the reaction L-ascorbate 6-phosphate + H2O = 3-dehydro-L-gulonate 6-phosphate. It functions in the pathway cofactor degradation; L-ascorbate degradation; D-xylulose 5-phosphate from L-ascorbate: step 1/4. Functionally, probably catalyzes the hydrolysis of L-ascorbate-6-P into 3-keto-L-gulonate-6-P. Is essential for L-ascorbate utilization under anaerobic conditions. The chain is Probable L-ascorbate-6-phosphate lactonase UlaG from Escherichia coli O45:K1 (strain S88 / ExPEC).